Here is a 429-residue protein sequence, read N- to C-terminus: Trigger factor (429 aa).

Residues 162–247 (DDTVDLAFEG…INAIKKLRQP (86 aa)) form the PPIase FKBP-type domain.

This sequence belongs to the FKBP-type PPIase family. Tig subfamily.

The protein localises to the cytoplasm. It carries out the reaction [protein]-peptidylproline (omega=180) = [protein]-peptidylproline (omega=0). In terms of biological role, involved in protein export. Acts as a chaperone by maintaining the newly synthesized protein in an open conformation. Functions as a peptidyl-prolyl cis-trans isomerase. In Fusobacterium nucleatum subsp. nucleatum (strain ATCC 25586 / DSM 15643 / BCRC 10681 / CIP 101130 / JCM 8532 / KCTC 2640 / LMG 13131 / VPI 4355), this protein is Trigger factor.